The chain runs to 490 residues: Cytochrome P450 71A22 (490 aa).

The chain crosses the membrane as a helical span at residues 2 to 22 (ESMIRIILLSLIIFITILFFI). Cys-432 lines the heme pocket.

This sequence belongs to the cytochrome P450 family. Requires heme as cofactor.

It localises to the membrane. This Arabidopsis thaliana (Mouse-ear cress) protein is Cytochrome P450 71A22 (CYP71A22).